Reading from the N-terminus, the 78-residue chain is DNA-directed RNA polymerase subunit omega (78 aa).

Belongs to the RNA polymerase subunit omega family. The RNAP catalytic core consists of 2 alpha, 1 beta, 1 beta' and 1 omega subunit. When a sigma factor is associated with the core the holoenzyme is formed, which can initiate transcription.

It carries out the reaction RNA(n) + a ribonucleoside 5'-triphosphate = RNA(n+1) + diphosphate. Promotes RNA polymerase assembly. Latches the N- and C-terminal regions of the beta' subunit thereby facilitating its interaction with the beta and alpha subunits. This is DNA-directed RNA polymerase subunit omega from Desulfovibrio desulfuricans (strain ATCC 27774 / DSM 6949 / MB).